We begin with the raw amino-acid sequence, 159 residues long: NAD(P)H-quinone oxidoreductase subunit J, chloroplastic (159 aa).

The protein belongs to the complex I 30 kDa subunit family. In terms of assembly, NDH is composed of at least 16 different subunits, 5 of which are encoded in the nucleus.

It is found in the plastid. Its subcellular location is the chloroplast thylakoid membrane. The enzyme catalyses a plastoquinone + NADH + (n+1) H(+)(in) = a plastoquinol + NAD(+) + n H(+)(out). The catalysed reaction is a plastoquinone + NADPH + (n+1) H(+)(in) = a plastoquinol + NADP(+) + n H(+)(out). In terms of biological role, NDH shuttles electrons from NAD(P)H:plastoquinone, via FMN and iron-sulfur (Fe-S) centers, to quinones in the photosynthetic chain and possibly in a chloroplast respiratory chain. The immediate electron acceptor for the enzyme in this species is believed to be plastoquinone. Couples the redox reaction to proton translocation, and thus conserves the redox energy in a proton gradient. This Oryza nivara (Indian wild rice) protein is NAD(P)H-quinone oxidoreductase subunit J, chloroplastic.